The following is a 416-amino-acid chain: MKVIVLGAGIVGVTSAYQLAKAGHDVTVVDRQPGPALETSFANAGEVSFGYCSPWAAPGIPMKAMKWLFMKHAPLILRPKLDMAMLSWMARMLSNCTSERYAINKSRMLRLADYSRIALADLRAETGIAYDERMQGTLQLFRTQQQLEASAKDVKALAADGIPYEVLDRDGCIRFEPALKHVRDKIVGGLLTPKDETGDCFKFTNALAAKAEALGVRFAYGTTIKALDVEAGRVRGVITDRERMSAEAVVVALGSYSPLLLKPLGIRLPVYPVKGYSLTIPIADASRAPESTVMDETYKIAITRLGDRIRVGGMAEISGYTNDLGLARRSTLEYSVTDLFPGGDISKASFWSGLRPMTPDGTPVIGPTKVAGLFLNTGHGTLGWTMSTGSARLIGDLVGGGQPEIDARDLAITRYG.

Position 3 to 17 (3 to 17) interacts with FAD; sequence VIVLGAGIVGVTSAY.

Belongs to the DadA oxidoreductase family. FAD is required as a cofactor.

It catalyses the reaction a D-alpha-amino acid + A + H2O = a 2-oxocarboxylate + AH2 + NH4(+). The protein operates within amino-acid degradation; D-alanine degradation; NH(3) and pyruvate from D-alanine: step 1/1. Oxidative deamination of D-amino acids. The sequence is that of D-amino acid dehydrogenase from Rhizobium johnstonii (strain DSM 114642 / LMG 32736 / 3841) (Rhizobium leguminosarum bv. viciae).